The following is a 171-amino-acid chain: Transcription factor E (171 aa).

The region spanning 1–81 (MLNLAKELVG…YWKVNVNQIN (81 aa)) is the HTH TFE/IIEalpha-type domain.

It belongs to the TFE family. In terms of assembly, monomer. Interaction with RNA polymerase subunits RpoF and RpoE is necessary for Tfe stimulatory transcription activity. Able to interact with Tbp and RNA polymerase in the absence of DNA promoter. Interacts both with the preinitiation and elongation complexes.

Transcription factor that plays a role in the activation of archaeal genes transcribed by RNA polymerase. Facilitates transcription initiation by enhancing TATA-box recognition by TATA-box-binding protein (Tbp), and transcription factor B (Tfb) and RNA polymerase recruitment. Not absolutely required for transcription in vitro, but particularly important in cases where Tbp or Tfb function is not optimal. It dynamically alters the nucleic acid-binding properties of RNA polymerases by stabilizing the initiation complex and destabilizing elongation complexes. Seems to translocate with the RNA polymerase following initiation and acts by binding to the non template strand of the transcription bubble in elongation complexes. The sequence is that of Transcription factor E from Sulfolobus acidocaldarius (strain ATCC 33909 / DSM 639 / JCM 8929 / NBRC 15157 / NCIMB 11770).